The following is an 833-amino-acid chain: Ribosome biogenesis protein BOP1 homolog (833 aa).

The interval 20–202 is disordered; the sequence is NKKSEPIAVS…DSDDSSEDES (183 aa). The span at 36 to 56 shows a compositional bias: low complexity; it reads SKPTTTATTTVSKSPVSTITT. Composition is skewed to acidic residues over residues 90–111 and 136–150; these read SEDDEDYESEEDDEGDDEEDVE and EAEESLVEYQSEDDS. Low complexity predominate over residues 154-170; sequence SSKSSSSTTTTTTTTKK. Residues 182 to 192 show a composition bias toward polar residues; that stretch reads KQWTNDPNQFY. Acidic residues predominate over residues 193–202; sequence DSDDSSEDES. WD repeat units follow at residues 331 to 370, 488 to 527, and 529 to 569; these read TKAIRMGWIKLNKKGKKGEKDKKDGNFDLWADEGEEKEKT, GHKARVRSISISPNGQWLASGSDDCTIKIWEVSSTRCLYS, and EVES…TQTE. The disordered stretch occupies residues 568 to 592; it reads TEHSPETEKILTKPPTDSSTEQQQN. The segment covering 582–592 has biased composition (polar residues); the sequence is PTDSSTEQQQN. WD repeat units lie at residues 618-660, 663-701, 704-743, 747-786, and 802-833; these read HHPF…TQSP, KSKTPNQVTRFHPNKPIFFVADQNIIRVYDLMKQELIKK, TGCRYISSIDIHPQGDNVIMGGYDKKVCWFDLDLSVRPYK, YHKMAVRKVIYHPTLPLFASCSDDLSIHVFHGMVYDDLLQ, and INDLGVLDIVFHPKQPWIFSSGADSTIRLYTN.

Belongs to the WD repeat BOP1/ERB1 family.

It is found in the nucleus. Its subcellular location is the nucleolus. It localises to the nucleoplasm. In terms of biological role, required for maturation of ribosomal RNAs and formation of the large ribosomal subunit. This Dictyostelium discoideum (Social amoeba) protein is Ribosome biogenesis protein BOP1 homolog.